We begin with the raw amino-acid sequence, 190 residues long: Nuclear transcription factor Y subunit A-7 (190 aa).

Residues 1–33 (MTSSIHELSDNIGSHEKQEQRDSHFQPPIPSAR) form a disordered region. The segment covering 7–24 (ELSDNIGSHEKQEQRDSH) has biased composition (basic and acidic residues). Residues 103–126 (FVNAKQYHGILRRRQSRARLESQN) carry the Subunit association domain (SAD) motif. The segment at residues 133 to 158 (KPYLHESRHLHAIRRPRGCGGRFLNA) is a DNA-binding region (NFYA/HAP2-type). The tract at residues 147–190 (RPRGCGGRFLNAKKEDEHHEDSSHEEKSNLSAGKSAMAASSGTS) is disordered. Basic and acidic residues predominate over residues 158–174 (AKKEDEHHEDSSHEEKS). Positions 177–190 (SAGKSAMAASSGTS) are enriched in low complexity.

This sequence belongs to the NFYA/HAP2 subunit family. In terms of assembly, heterotrimeric transcription factor composed of three components, NF-YA, NF-YB and NF-YC. NF-YB and NF-YC must interact and dimerize for NF-YA association and DNA binding.

Its subcellular location is the nucleus. Its function is as follows. Stimulates the transcription of various genes by recognizing and binding to a CCAAT motif in promoters. The chain is Nuclear transcription factor Y subunit A-7 (NFYA7) from Arabidopsis thaliana (Mouse-ear cress).